Consider the following 475-residue polypeptide: Tetratricopeptide repeat protein 29 (475 aa).

7 TPR repeats span residues 92 to 131 (DALREAARVRSLFWLQKPLEEQPDKLDYFYHYLTRAEDAE), 136 to 173 (FEDVYNNLYALACYFNNPEDKWVRNHFYERCFKIAQLI), 182 to 215 (AEAHMHMGLLYEEDGQLLEAAEHYEAFHQLTQGR), 234 to 267 (LRTYRLLSDKMLQNKEYKQAIKILIKASEIAKEG), 274 to 307 (GEASYYLGLAHLAAEEYETALTVLDTYCKISTEL), 314 to 347 (GRAYEAIAKVLQSQGNTTEAIKYLKKFVKIARNN), and 354 to 387 (VRASTMLGDIYNEKGHYNKASQRFQQAFDTTVEL). The disordered stretch occupies residues 436–475 (DIEPDPVTEEFRGSTVETVSQNSEHLEELSRFPGDQKNET). The segment covering 459–475 (EHLEELSRFPGDQKNET) has biased composition (basic and acidic residues).

The protein localises to the cytoplasm. Its subcellular location is the cytoskeleton. It is found in the flagellum axoneme. In terms of biological role, axonemal protein which is implicated in axonemal and/or peri-axonemal structure assembly and regulates flagellum assembly and beating and therefore sperm motility. The protein is Tetratricopeptide repeat protein 29 (TTC29) of Macaca fascicularis (Crab-eating macaque).